The chain runs to 34 residues: Subtilosin-A (34 aa).

Residues 1–34 constitute a cross-link (cyclopeptide (Asn-Gly)); it reads NKGCATCSIGIACLVDGPIPDFECAGATGLGLWG. The segment at residues 7-28 is a cross-link (2-cysteinyl-D-allo-threonine (Cys-Thr)); that stretch reads CSIGIACLVDGPIPDFECAGAT. Residues 13-22 constitute a cross-link (2-cysteinyl-L-phenylalanine (Cys-Phe)); it reads CLVDGPIPDF.

It belongs to the bacteriocin class V family. In terms of processing, alpha-amino of Asn-1 is covalently linked with the carboxyl of Gly-34 to form a cyclopeptide. Thioether cross-links are formed between cysteines and the alpha-carbons of other amino acids, Cys-7 to Thr-28 and Cys-13 to Phe-22. In forming this cross-link, Thr-28 is converted to D-amino acid.

The protein localises to the secreted. Has bactericidal activity against some Gram-positive bacteria. This chain is Subtilosin-A, found in Cytobacillus firmus (Bacillus firmus).